The sequence spans 193 residues: CASP-like protein 1D1 (193 aa).

The disordered stretch occupies residues methionine 1–lysine 24. The Cytoplasmic portion of the chain corresponds to methionine 1–glutamine 30. The span at serine 14–lysine 24 shows a compositional bias: polar residues. Residues valine 31 to serine 51 traverse the membrane as a helical segment. Residues lysine 52–alanine 76 are Extracellular-facing. The helical transmembrane segment at leucine 77–valine 97 threads the bilayer. At threonine 98 to serine 108 the chain is on the cytoplasmic side. A helical transmembrane segment spans residues alanine 109 to alanine 129. Residues threonine 130–histidine 162 lie on the Extracellular side of the membrane. A helical transmembrane segment spans residues valine 163–isoleucine 183. The Cytoplasmic portion of the chain corresponds to serine 184–arginine 193.

Belongs to the Casparian strip membrane proteins (CASP) family. Homodimer and heterodimers.

The protein localises to the cell membrane. The chain is CASP-like protein 1D1 from Arabidopsis thaliana (Mouse-ear cress).